A 348-amino-acid polypeptide reads, in one-letter code: Dihydroorotase (348 aa).

Residues H17 and H19 each coordinate Zn(2+). Residues 19 to 21 and N45 each bind substrate; that span reads HLR. Positions 103, 140, and 178 each coordinate Zn(2+). The residue at position 103 (K103) is an N6-carboxylysine. H140 contacts substrate. L223 contributes to the substrate binding site. D251 provides a ligand contact to Zn(2+). D251 is an active-site residue. Residues H255 and A267 each contribute to the substrate site.

It belongs to the metallo-dependent hydrolases superfamily. DHOase family. Class II DHOase subfamily. Homodimer. Requires Zn(2+) as cofactor.

It catalyses the reaction (S)-dihydroorotate + H2O = N-carbamoyl-L-aspartate + H(+). It participates in pyrimidine metabolism; UMP biosynthesis via de novo pathway; (S)-dihydroorotate from bicarbonate: step 3/3. Catalyzes the reversible cyclization of carbamoyl aspartate to dihydroorotate. In Escherichia coli (strain SMS-3-5 / SECEC), this protein is Dihydroorotase.